We begin with the raw amino-acid sequence, 228 residues long: MSSLRNAIPRPAHKERSQPEARKRFGILEKHKDYIIRANAYHKKQETLKILRQKAAFKNPDEFNFKMINSKTVDGRHRPKDEVNKYSAEELMIMKTQDIGYVFQKWQSEKNKIDKLTASLQCTGDQSSRRHVYYAEDREEARELEVQGRSKSDISTVEIPKDIKKKMDRSYRDLEGRKSRAKDLEKLYTDMSMQKELQKKGRKRKLRDDELLNPNGKAVYKWRADRKR.

Disordered regions lie at residues Met1–Lys23 and Ser192–Leu211. Positions Ala12–Lys23 are enriched in basic and acidic residues.

The protein belongs to the UTP11 family. Component of the ribosomal small subunit (SSU) processome.

Its subcellular location is the nucleus. It is found in the nucleolus. Involved in nucleolar processing of pre-18S ribosomal RNA. The polypeptide is Probable U3 small nucleolar RNA-associated protein 11 (Arabidopsis thaliana (Mouse-ear cress)).